Consider the following 285-residue polypeptide: NAD kinase (285 aa).

D66 (proton acceptor) is an active-site residue. NAD(+) is bound by residues 66–67 (DG), 137–138 (ND), R148, R165, D167, and 178–183 (TAYSLS).

Belongs to the NAD kinase family. It depends on a divalent metal cation as a cofactor.

The protein resides in the cytoplasm. The enzyme catalyses NAD(+) + ATP = ADP + NADP(+) + H(+). Its function is as follows. Involved in the regulation of the intracellular balance of NAD and NADP, and is a key enzyme in the biosynthesis of NADP. Catalyzes specifically the phosphorylation on 2'-hydroxyl of the adenosine moiety of NAD to yield NADP. The chain is NAD kinase from Prosthecochloris aestuarii (strain DSM 271 / SK 413).